Here is a 266-residue protein sequence, read N- to C-terminus: MTYRILITNDDGVASPGLMAVYEAVRSLGEAVIVAPASQQSAVGRSMTLFEPLRIEKMNLQGTMAYAVNGTPTDSVIMGMYVVMADRKPDLVISGINIGENLSAEAVTTSGTIGAAMEAANQGVPAIAVSMHVLEEADKFATAAMAQDYAVAQRLIGKLARQVLENGLPEGVDLLNVNIPAGATPETPVVVTRLARRMYDTIVHHRMDPRGRSYYWVDGTIVADAPEGTDLHTVHQRRQVSITPLRLDMTACEQTVEIERIIRDNW.

4 residues coordinate a divalent metal cation: D10, D11, S41, and N97.

This sequence belongs to the SurE nucleotidase family. A divalent metal cation is required as a cofactor.

The protein localises to the cytoplasm. The enzyme catalyses a ribonucleoside 5'-phosphate + H2O = a ribonucleoside + phosphate. Its function is as follows. Nucleotidase that shows phosphatase activity on nucleoside 5'-monophosphates. In Methanocella arvoryzae (strain DSM 22066 / NBRC 105507 / MRE50), this protein is 5'-nucleotidase SurE.